The sequence spans 311 residues: Malate dehydrogenase (311 aa).

NAD(+) is bound by residues 7-13 (GAAGGIG) and D34. Substrate contacts are provided by R81 and R87. Residues N94 and 117 to 119 (ITN) each bind NAD(+). Positions 119 and 153 each coordinate substrate. The Proton acceptor role is filled by H177. NAD(+) is bound at residue M227.

Belongs to the LDH/MDH superfamily. MDH type 1 family. As to quaternary structure, homodimer.

It carries out the reaction (S)-malate + NAD(+) = oxaloacetate + NADH + H(+). Functionally, catalyzes the reversible oxidation of malate to oxaloacetate. The chain is Malate dehydrogenase from Colwellia psychrerythraea (strain 34H / ATCC BAA-681) (Vibrio psychroerythus).